Reading from the N-terminus, the 97-residue chain is Protein RnfH (97 aa).

It belongs to the UPF0125 (RnfH) family.

The chain is Protein RnfH from Paramagnetospirillum magneticum (strain ATCC 700264 / AMB-1) (Magnetospirillum magneticum).